The primary structure comprises 552 residues: Steroid transmembrane transporter SLC22A24 (552 aa).

The next 12 helical transmembrane spans lie at 16-36, 144-164, 178-198, 204-224, 235-255, 267-287, 350-370, 378-398, 407-427, 435-455, 469-489, and 496-516; these read FQILQTAFFCICILIAYPHML, LISVAQSLFMVAQLLGGLIFG, CCLLLFAISGTCAAIAPTFPV, FLGGICLMNIITNAVSTMSEW, GIILNSCNIGQILMGGLGFVI, IPLFILFLFSRSVLESAQWLI, IFYLSFVRFAATIPFLGLMLN, IFLFQIIFGAVTFIVRCAVLL, ISQMVSSFLVGIPILVNIFLS, VALATLGIGATTAIFTTHTVH, IGLNAMFSRLGATLAPLLMIL, and LPWIIYGVSSILAGLVVLLLP. Residues 524 to 552 form a disordered region; that stretch reads PNTIQDVENNRRDSRKTKQEDISMKVTQF. The span at 531-546 shows a compositional bias: basic and acidic residues; it reads ENNRRDSRKTKQEDIS.

The protein belongs to the major facilitator (TC 2.A.1) superfamily. Organic cation transporter (TC 2.A.1.19) family.

The protein resides in the cell membrane. The enzyme catalyses estrone 3-sulfate(out) + glutarate(in) = estrone 3-sulfate(in) + glutarate(out). It carries out the reaction 17beta-estradiol 17-O-(beta-D-glucuronate)(out) + glutarate(in) = 17beta-estradiol 17-O-(beta-D-glucuronate)(in) + glutarate(out). It catalyses the reaction taurocholate(out) + glutarate(in) = taurocholate(in) + glutarate(out). The catalysed reaction is glycocholate(out) + glutarate(in) = glycocholate(in) + glutarate(out). The enzyme catalyses dehydroepiandrosterone 3-sulfate(out) + glutarate(in) = dehydroepiandrosterone 3-sulfate(in) + glutarate(out). It carries out the reaction glutarate(in) + succinate(out) = glutarate(out) + succinate(in). Functionally, renal transmembrane organic anion/dicarboxylate exchanger that participates in the reabsorption of conjugated steroids, as well as bile acids, driven by an outward gradient of dicarboxylates such as glutarate or succinate. Transports taurocholate, estrone 3-sulfate, and estradiol-17-glucuronide (17beta-estradiol 17-O-(beta-D-glucuronate)), but not androstanediol glucuronide (5alpha-androstane-3alpha,17beta-diol 3-O-(beta-D-glucuronate)). This chain is Steroid transmembrane transporter SLC22A24, found in Equus caballus (Horse).